The sequence spans 250 residues: Phosphate import ATP-binding protein PstB (250 aa).

In terms of domain architecture, ABC transporter spans 4-245 (LTARDLKLSF…PRHELTEKYV (242 aa)). 36-43 (GPSGSGKS) contributes to the ATP binding site.

The protein belongs to the ABC transporter superfamily. Phosphate importer (TC 3.A.1.7) family. As to quaternary structure, the complex is composed of two ATP-binding proteins (PstB), two transmembrane proteins (PstC and PstA) and a solute-binding protein (PstS).

The protein resides in the cell membrane. The catalysed reaction is phosphate(out) + ATP + H2O = ADP + 2 phosphate(in) + H(+). In terms of biological role, part of the ABC transporter complex PstSACB involved in phosphate import. Responsible for energy coupling to the transport system. This chain is Phosphate import ATP-binding protein PstB, found in Pyrobaculum aerophilum (strain ATCC 51768 / DSM 7523 / JCM 9630 / CIP 104966 / NBRC 100827 / IM2).